Consider the following 354-residue polypeptide: LAS seventeen-binding protein 5 (354 aa).

In terms of domain architecture, VHS spans 15 to 161; it reads TIFRIVSSRD…LGQTVKQRYS (147 aa). Disordered regions lie at residues 160 to 184 and 296 to 354; these read YSKS…DDSA and SAQD…HNKI. A compositionally biased stretch (basic and acidic residues) spans 296-310; the sequence is SAQDDSSDESDHGSY.

Belongs to the LSB5 family. Interacts with SLA1 and LAS17.

It is found in the cytoplasm. The protein localises to the cell cortex. The protein resides in the cytoskeleton. Essential for the organization of the actin cytoskeleton, fluid phase endocytosis and vesicle trafficking, together with YSC84. This chain is LAS seventeen-binding protein 5 (LSB5), found in Saccharomyces cerevisiae (strain ATCC 204508 / S288c) (Baker's yeast).